Reading from the N-terminus, the 378-residue chain is Acetylornithine deacetylase (378 aa).

H76 provides a ligand contact to Zn(2+). D78 is a catalytic residue. D108 is a binding site for Zn(2+). Residue E140 is part of the active site. Zn(2+)-binding residues include E141, E165, and H351.

The protein belongs to the peptidase M20A family. ArgE subfamily. Homodimer. Requires Zn(2+) as cofactor. It depends on Co(2+) as a cofactor. The cofactor is glutathione.

It localises to the cytoplasm. It catalyses the reaction N(2)-acetyl-L-ornithine + H2O = L-ornithine + acetate. It functions in the pathway amino-acid biosynthesis; L-arginine biosynthesis; L-ornithine from N(2)-acetyl-L-ornithine (linear): step 1/1. Catalyzes the hydrolysis of the amide bond of N(2)-acetylated L-amino acids. Cleaves the acetyl group from N-acetyl-L-ornithine to form L-ornithine, an intermediate in L-arginine biosynthesis pathway, and a branchpoint in the synthesis of polyamines. In Vibrio vulnificus (strain CMCP6), this protein is Acetylornithine deacetylase.